The following is a 103-amino-acid chain: Small ribosomal subunit protein uS10 (103 aa).

This sequence belongs to the universal ribosomal protein uS10 family. Part of the 30S ribosomal subunit.

Functionally, involved in the binding of tRNA to the ribosomes. The protein is Small ribosomal subunit protein uS10 of Mycoplasmopsis pulmonis (strain UAB CTIP) (Mycoplasma pulmonis).